A 95-amino-acid polypeptide reads, in one-letter code: Bacterial microcompartment shell protein EutM (95 aa).

One can recognise a BMC domain in the interval 6-90 (ALGMIETKGL…PHFEVDAILP (85 aa)).

Belongs to the bacterial microcompartments protein family. As to quaternary structure, homohexamer; has a positively charged pore 9 Angstroms in diameter. The hexamers pack into a two-dimensional array. May interact with EutQ.

It localises to the bacterial microcompartment. The protein operates within amine and polyamine degradation; ethanolamine degradation. Its function is as follows. A component of the bacterial microcompartment (BMC) shell dedicated to ethanolamine degradation. Each homohexamer has a central pore with an opening of up to 9.0 Angstroms. Expression of the eut operon may allow this bacteria to use ethanolamine as a carbon, nitrogen and energy source. The pore probably allows metabolite passage into and out of the BMC. This chain is Bacterial microcompartment shell protein EutM, found in Clostridioides difficile (strain 630) (Peptoclostridium difficile).